The following is a 626-amino-acid chain: Glyco-Gag protein (626 aa).

The Cytoplasmic segment spans residues 1–66; that stretch reads LGDVPGTSGA…SVWNRSRAAR (66 aa). Residues 67–86 traverse the membrane as a helical segment; it reads LVCCSIVLCCLCLTVFLYLS. Residues 87-626 lie on the Extracellular side of the membrane; the sequence is ENMGQAVTTP…PQASLLTLDD (540 aa). A glycan (N-linked (GlcNAc...) asparagine; by host) is linked at Asn-113. 2 stretches are compositionally biased toward pro residues: residues 198-212 and 249-261; these read PPSA…PLST and DPPP…PPSP. Disordered stretches follow at residues 198 to 306 and 522 to 626; these read PPSA…FPLR and RETP…TLDD. 2 stretches are compositionally biased toward basic and acidic residues: residues 522 to 554 and 574 to 607; these read RETP…EKER and RQDR…DCPK. Residues 526–566 are a coiled coil; sequence EEREERIRRETEEKEERRRAEDVQREKERDRRRHREMSKLL. Residues 590–607 form a CCHC-type zinc finger; it reads DQCAYCKEKGHWARDCPK.

Glycosylated by host. Post-translationally, cleaved by host near the middle of the molecule, releasing the c-terminal half containing capsid and nucleoprotein domains op GAG.

It is found in the host cell membrane. Functionally, plays a role in viral particle release. Presumably acts by facilitating the fission of the virion bud at the cell surface. May prevent the antiviral activity of murine APOBEC3. This Mus musculus (Mouse) protein is Glyco-Gag protein.